Consider the following 398-residue polypeptide: Elongation factor Tu (398 aa).

Residues 10–207 (KPHVNIGTIG…TVDEYIPEPE (198 aa)) enclose the tr-type G domain. Residues 19–26 (GHVDHGKT) are G1. GTP is bound at residue 19 to 26 (GHVDHGKT). Threonine 26 is a binding site for Mg(2+). The tract at residues 63–67 (GITIN) is G2. The tract at residues 84 to 87 (DAPG) is G3. Residues 84 to 88 (DAPGH) and 139 to 142 (NKVD) each bind GTP. Residues 139–142 (NKVD) form a G4 region. The G5 stretch occupies residues 177–179 (SAL).

The protein belongs to the TRAFAC class translation factor GTPase superfamily. Classic translation factor GTPase family. EF-Tu/EF-1A subfamily. As to quaternary structure, monomer.

The protein localises to the cytoplasm. The catalysed reaction is GTP + H2O = GDP + phosphate + H(+). Functionally, GTP hydrolase that promotes the GTP-dependent binding of aminoacyl-tRNA to the A-site of ribosomes during protein biosynthesis. The sequence is that of Elongation factor Tu from Streptococcus pneumoniae serotype 4 (strain ATCC BAA-334 / TIGR4).